Reading from the N-terminus, the 431-residue chain is MNAPHRDDGFFTESLSSRDPELFASITGELGRQRDEIELIASENIVSRAVMEAQGSVMTNKYAEGYAGKRYYGGCDYVDVAETLAIERAKQLFGCAYVNVQPNSGSQANQGVFQALIKPGDTILGMELASGGHLTHGAAPNQSGKWFNAIQYGVRQQDQLIDYDQVAALAREHKPKLIIAGGSAIPRQIDFARFRAIADEVGALLMVDMAHFAGLVAGGAHPSPFPHADVATTTTHKTLRGPRGGMILTNSEEIAKKVNSAIFPGIQGGPLMHVIAAKAVAFGEALRPEFKAYAAQVVKNAQALADELMKGGLDIVTGGTDTHLMLVDLRPKGVKGNATEKALGRAHITCNKNGIPFDPEKPTVTSGVRLGTPAGTTRGFGEAEFREIGRLIVEVVDGLAANGEEGNAAVEEAVKAKVAALCARFPLYPTL.

(6S)-5,6,7,8-tetrahydrofolate contacts are provided by residues leucine 128 and 132 to 134 (GHL). An N6-(pyridoxal phosphate)lysine modification is found at lysine 237. Glutamate 253 is a (6S)-5,6,7,8-tetrahydrofolate binding site.

It belongs to the SHMT family. In terms of assembly, homodimer. Requires pyridoxal 5'-phosphate as cofactor.

It is found in the cytoplasm. It carries out the reaction (6R)-5,10-methylene-5,6,7,8-tetrahydrofolate + glycine + H2O = (6S)-5,6,7,8-tetrahydrofolate + L-serine. The protein operates within one-carbon metabolism; tetrahydrofolate interconversion. Its pathway is amino-acid biosynthesis; glycine biosynthesis; glycine from L-serine: step 1/1. Catalyzes the reversible interconversion of serine and glycine with tetrahydrofolate (THF) serving as the one-carbon carrier. This reaction serves as the major source of one-carbon groups required for the biosynthesis of purines, thymidylate, methionine, and other important biomolecules. Also exhibits THF-independent aldolase activity toward beta-hydroxyamino acids, producing glycine and aldehydes, via a retro-aldol mechanism. This is Serine hydroxymethyltransferase from Cereibacter sphaeroides (strain ATCC 17023 / DSM 158 / JCM 6121 / CCUG 31486 / LMG 2827 / NBRC 12203 / NCIMB 8253 / ATH 2.4.1.) (Rhodobacter sphaeroides).